The chain runs to 290 residues: MKRTPHLLAIQSHVVFGHAGNSAAVFPMQRIGVNVWPLNTVQFSNHTQYGQWAGEVLAPAQIPALVEGISNIGELGHCDAVLSGYLGSAEQGRAILAGVERIKAVNPKALYLCDPVMGHAEKGCIVPQEVSEFLLDDAVAQADILCPNQLELDSFCGRRAQSLEDCVRMARGLLERGPQVVLVKHLAYPGRCEDMFEMLLVTRDHSWHLRRPLLAFPRQPVGVGDLTSGLFLARVLLGDSWVQAFEYTAAAVHEVLLETQACASYELQLVRAQDRIAYPRVRFEAQRLAF.

Substrate-binding positions include Ser-12 and 47 to 48; that span reads TQ. ATP contacts are provided by residues Asp-114, Glu-151, Lys-184, and 211-214; that span reads RPLL. Asp-225 is a substrate binding site.

Belongs to the pyridoxine kinase family. PdxY subfamily. As to quaternary structure, homodimer. Mg(2+) serves as cofactor.

It catalyses the reaction pyridoxal + ATP = pyridoxal 5'-phosphate + ADP + H(+). The protein operates within cofactor metabolism; pyridoxal 5'-phosphate salvage; pyridoxal 5'-phosphate from pyridoxal: step 1/1. In terms of biological role, pyridoxal kinase involved in the salvage pathway of pyridoxal 5'-phosphate (PLP). Catalyzes the phosphorylation of pyridoxal to PLP. This Pseudomonas putida (strain W619) protein is Pyridoxal kinase PdxY.